Here is a 609-residue protein sequence, read N- to C-terminus: UvrABC system protein C (609 aa).

One can recognise a GIY-YIG domain in the interval 22-100 (EKPGVYQYLN…IKKYKPRYNV (79 aa)). The UVR domain maps to 214–249 (QDISRMLVEKMQELANEMKFEEAQKIKEKYLLIENY).

It belongs to the UvrC family. As to quaternary structure, interacts with UvrB in an incision complex.

Its subcellular location is the cytoplasm. The UvrABC repair system catalyzes the recognition and processing of DNA lesions. UvrC both incises the 5' and 3' sides of the lesion. The N-terminal half is responsible for the 3' incision and the C-terminal half is responsible for the 5' incision. This chain is UvrABC system protein C, found in Bacteroides thetaiotaomicron (strain ATCC 29148 / DSM 2079 / JCM 5827 / CCUG 10774 / NCTC 10582 / VPI-5482 / E50).